The sequence spans 412 residues: uncharacterized protein (412 aa).

The first 21 residues, 1 to 21, serve as a signal peptide directing secretion; that stretch reads MIIPMLRILLIVLFVLNLVTS. Disordered stretches follow at residues 85–134, 250–294, and 327–357; these read QPPA…STTT, STTE…TPGT, and VELG…HVRE. Residues 88 to 105 show a composition bias toward low complexity; sequence ASLTSLPAAPPSAQVAPP. A compositionally biased stretch (polar residues) spans 124 to 134; the sequence is TPQASISSTTT. Composition is skewed to low complexity over residues 250-259 and 266-293; these read STTENTTEQS and TTST…GTPG. Residues 330–347 show a composition bias toward acidic residues; it reads GEGDDDEENDDDSSEEEE. Over residues 348–357 the composition is skewed to basic and acidic residues; the sequence is TKPPARHVRE. The ShKT domain occupies 371 to 408; it reads CDEEEDDKGKICKLWAAGGLCGTHKPTMFLFCRKTCLC.

This is an uncharacterized protein from Caenorhabditis elegans.